A 265-amino-acid polypeptide reads, in one-letter code: 5'-nucleotidase SurE (265 aa).

A divalent metal cation is bound by residues aspartate 8, aspartate 9, serine 40, and asparagine 98.

It belongs to the SurE nucleotidase family. A divalent metal cation serves as cofactor.

It is found in the cytoplasm. It carries out the reaction a ribonucleoside 5'-phosphate + H2O = a ribonucleoside + phosphate. Nucleotidase that shows phosphatase activity on nucleoside 5'-monophosphates. This chain is 5'-nucleotidase SurE, found in Nostoc sp. (strain PCC 7120 / SAG 25.82 / UTEX 2576).